The primary structure comprises 230 residues: Orotidine 5'-phosphate decarboxylase (230 aa).

Substrate is bound by residues Asp11, Lys34, 61-70 (DLKLHDIPNT), Thr117, Arg179, Gln188, Gly208, and Arg209. Lys63 acts as the Proton donor in catalysis.

The protein belongs to the OMP decarboxylase family. Type 1 subfamily. In terms of assembly, homodimer.

It catalyses the reaction orotidine 5'-phosphate + H(+) = UMP + CO2. Its pathway is pyrimidine metabolism; UMP biosynthesis via de novo pathway; UMP from orotate: step 2/2. In terms of biological role, catalyzes the decarboxylation of orotidine 5'-monophosphate (OMP) to uridine 5'-monophosphate (UMP). In Streptococcus pyogenes serotype M6 (strain ATCC BAA-946 / MGAS10394), this protein is Orotidine 5'-phosphate decarboxylase.